The following is a 484-amino-acid chain: Cobyric acid synthase (484 aa).

One can recognise a GATase cobBQ-type domain in the interval 248–435; the sequence is VLKVIVPVLP…LHGLFEGSQS (188 aa). Cys-329 serves as the catalytic Nucleophile. His-427 is an active-site residue.

It belongs to the CobB/CobQ family. CobQ subfamily.

It functions in the pathway cofactor biosynthesis; adenosylcobalamin biosynthesis. Catalyzes amidations at positions B, D, E, and G on adenosylcobyrinic A,C-diamide. NH(2) groups are provided by glutamine, and one molecule of ATP is hydrogenolyzed for each amidation. This is Cobyric acid synthase from Pseudomonas putida (strain GB-1).